A 905-amino-acid chain; its full sequence is MAYNGRDQEYGGHALQDLPAGSSQYHLPPQENDEEQGRGLLNSGYEQDRLGARTPPDRPVSAYSLTESYAPGASSAMPGQGPTGYGDTGGSFGQFGNLDANAPFPRPDSAFDPEDSWVERQQQPQMGGGGGLGRSKTRKIKLVQGSVLSIDYPVPSAIKNAVQPQYRDAESGTEEFHKMRYTAATCDPNDFTLKNGYDLRPRMYNRHTELLIAITYYNEDKVLLARTLHHTMQNIRDIVNLKKSTFWNKGGPAWQKIVVCLVFDGIDKADKNTLDVLATVGVYQDGVIKKDVDGKETVAHIFEYTSQLSVTPNQQLIRPTNEGSQNLPPVQMIFCLKQKNTKKINSHRWLFNAFGRILNPEVCILLDAGTKPSPRSLLALWEGFYNDKDLGGACGEIHAMLGKGGKKLFNPLVAVQNFEYKISNILDKPLESSFGYVSVLPGAFSAYRFRAIMGRPLEQYFHGDHTLSKMLGKKGIDGMNIFKKNMFLAEDRILCFELVAKAGQKWHLSYIKAAKGETDVPEGAAEFISQRRRWLNGSFAATLYSLMHFGRMYKSGHNIIRMFFLHIQLIYTTLNTMFAWFSLGSYWLTTSVIMDLVGKPNATSGVHAWPFGDTGTPIVNALLQYLYLAFVMLQFILALGNRPKGSKFTYIASFMVFGLIQGYILVLSAYLVVRAFDTPIGDQISFASTDAFLNSFFGGSSAGGVILVALITIYGLNFIASFMYLDPWHMFHSFPYYLVLMSTYINILMVYAFNNWHDVSWGTKGSDKAEALPSAHVTKGEKNEVVVEEVEKEQEDIDSQFEQTVRRALAPFKEEEEVEKADVEDGYKSFRTGLVVCWLFGNILLIVCITSTNFDNLGWGEPATERKAHYFQFLLYATAVLSLVRFFGFLWFLGRTGIMCCFSRN.

Over residues 1 to 10 the composition is skewed to basic and acidic residues; sequence MAYNGRDQEY. The interval 1–136 is disordered; that stretch reads MAYNGRDQEY…GGGGGLGRSK (136 aa). Positions 81–93 are enriched in gly residues; it reads GPTGYGDTGGSFG. Residue Asn536 is glycosylated (N-linked (GlcNAc...) asparagine). A helical membrane pass occupies residues 562–584; that stretch reads MFFLHIQLIYTTLNTMFAWFSLG. Residue Asn601 is glycosylated (N-linked (GlcNAc...) asparagine). A run of 6 helical transmembrane segments spans residues 618–638, 653–673, 705–725, 733–753, 832–852, and 873–893; these read IVNA…FILA, SFMV…YLVV, VILV…FMYL, SFPY…VYAF, TGLV…ITST, and FLLY…LWFL.

Belongs to the chitin synthase family. Class III subfamily.

The protein resides in the cell membrane. It carries out the reaction [(1-&gt;4)-N-acetyl-beta-D-glucosaminyl](n) + UDP-N-acetyl-alpha-D-glucosamine = [(1-&gt;4)-N-acetyl-beta-D-glucosaminyl](n+1) + UDP + H(+). Polymerizes chitin, a structural polymer of the cell wall and septum, by transferring the sugar moiety of UDP-GlcNAc to the non-reducing end of the growing chitin polymer. Plays essential functions in fungal survival and host infection. This is Chitin synthase 3B from Gibberella zeae (strain ATCC MYA-4620 / CBS 123657 / FGSC 9075 / NRRL 31084 / PH-1) (Wheat head blight fungus).